The chain runs to 824 residues: Glycerol-3-phosphate acyltransferase (824 aa).

The HXXXXD motif signature appears at 302–307 (CHRSHM).

The protein belongs to the GPAT/DAPAT family.

Its subcellular location is the cell inner membrane. It catalyses the reaction sn-glycerol 3-phosphate + an acyl-CoA = a 1-acyl-sn-glycero-3-phosphate + CoA. It participates in phospholipid metabolism; CDP-diacylglycerol biosynthesis; CDP-diacylglycerol from sn-glycerol 3-phosphate: step 1/3. The sequence is that of Glycerol-3-phosphate acyltransferase from Actinobacillus pleuropneumoniae serotype 7 (strain AP76).